The chain runs to 171 residues: Transcription factor E (171 aa).

Positions 1 to 81 (MLNLAKELVG…YWKVNVNQIN (81 aa)) constitute an HTH TFE/IIEalpha-type domain.

The protein belongs to the TFE family. In terms of assembly, monomer. Interaction with RNA polymerase subunits RpoF and RpoE is necessary for Tfe stimulatory transcription activity. Able to interact with Tbp and RNA polymerase in the absence of DNA promoter. Interacts both with the preinitiation and elongation complexes.

Transcription factor that plays a role in the activation of archaeal genes transcribed by RNA polymerase. Facilitates transcription initiation by enhancing TATA-box recognition by TATA-box-binding protein (Tbp), and transcription factor B (Tfb) and RNA polymerase recruitment. Not absolutely required for transcription in vitro, but particularly important in cases where Tbp or Tfb function is not optimal. It dynamically alters the nucleic acid-binding properties of RNA polymerases by stabilizing the initiation complex and destabilizing elongation complexes. Seems to translocate with the RNA polymerase following initiation and acts by binding to the non template strand of the transcription bubble in elongation complexes. The sequence is that of Transcription factor E from Sulfolobus acidocaldarius (strain ATCC 33909 / DSM 639 / JCM 8929 / NBRC 15157 / NCIMB 11770).